Here is a 329-residue protein sequence, read N- to C-terminus: Serpentine receptor class alpha-3 (329 aa).

7 helical membrane passes run 25–45, 57–77, 104–124, 144–164, 187–207, 238–258, and 273–293; these read LIYFVLIITTLFFTFFALKVI, ILLYQNLFSANIHQIFLGITI, YLEMFIAGLSGMVYGQTGLLF, GIITSIIVLLLSGSTARIIIW, TMFFSICTFISLFNLVISLLI, ICFLTFFQFIFMFIYSFGVFL, and FWVVWVYTIPFIAASFPILLI.

Belongs to the nematode receptor-like protein sra family.

The protein resides in the membrane. The protein is Serpentine receptor class alpha-3 (sra-3) of Caenorhabditis elegans.